Consider the following 1007-residue polypeptide: Serine/threonine-protein kinase PRP4 homolog (1007 aa).

Polar residues predominate over residues 1–10 (MAAAETQSLR). The segment at 1–99 (MAAAETQSLR…EGMSPAKRTK (99 aa)) is disordered. At A2 the chain carries N-acetylalanine. Phosphoserine is present on residues S8, S20, S23, and S32. 2 stretches are compositionally biased toward basic residues: residues 39-59 (KHSRHKKKKHKHRSKHKKHKH) and 67-81 (KKHKHKHKHKKHKRK). Positions 82–91 (EIIDASDKEG) are enriched in basic and acidic residues. 2 positions are modified to phosphoserine: S87 and S93. K99 bears the N6-acetyllysine; alternate mark. Residue K99 forms a Glycyl lysine isopeptide (Lys-Gly) (interchain with G-Cter in SUMO2); alternate linkage. K111 is covalently cross-linked (Glycyl lysine isopeptide (Lys-Gly) (interchain with G-Cter in SUMO2)). K117 participates in a covalent cross-link: Glycyl lysine isopeptide (Lys-Gly) (interchain with G-Cter in SUMO2); alternate. A Glycyl lysine isopeptide (Lys-Gly) (interchain with G-Cter in SUMO1); alternate cross-link involves residue K117. The residue at position 131 (S131) is a Phosphoserine. Y140 carries the post-translational modification Phosphotyrosine. Disordered stretches follow at residues 140–533 (YESG…EEED) and 559–583 (SNMSVPSEPSSPQSSTRTRSPSPDD). S142, S144, and S166 each carry phosphoserine. Residues 157-168 (GNRSSTRSSSTK) are compositionally biased toward low complexity. Glycyl lysine isopeptide (Lys-Gly) (interchain with G-Cter in SUMO2) cross-links involve residues K170 and K177. Composition is skewed to basic residues over residues 179 to 202 (TTKKRSKSRSKERTRHRSDKKKSK) and 214 to 230 (RSKSKERKKSKSPSKRS). Phosphoserine occurs at positions 239, 241, 257, 277, 283, 292, and 294. A compositionally biased stretch (basic and acidic residues) spans 247 to 270 (RSQEKIGKARSPTDDKVKIEDKSK). Residues 302–315 (SKDRRSRSKERKSK) show a composition bias toward basic residues. Basic and acidic residues predominate over residues 316 to 325 (RSETDKEKKP). A phosphoserine mark is found at S328, S354, S356, S366, and S368. The segment covering 342–367 (PSRRPGRSPKRRSLSPKPRDKSRRSR) has biased composition (basic residues). Position 385 is a phosphothreonine (T385). At S387 the chain carries Phosphoserine. Basic and acidic residues-rich tracts occupy residues 395–408 (RSLERKRREPERRR) and 415–429 (RPRDDILSRRERSKD). A phosphoserine mark is found at S427, S431, and S437. The segment covering 438–497 (PTRRRSRSPIRRRSRSPLRRSRSPRRRSRSPRRRDRGRRSRSRLRRRSRSRGGRRRRSRS) has biased composition (basic residues). A phosphoserine mark is found at S518, S519, S520, S565, S569, S578, and S580. Over residues 518-533 (SSSDDNLEDFDVEEED) the composition is skewed to acidic residues. Low complexity predominate over residues 562–581 (SVPSEPSSPQSSTRTRSPSP). Residues K593 and K659 each participate in a glycyl lysine isopeptide (Lys-Gly) (interchain with G-Cter in SUMO2) cross-link. The region spanning 687 to 1006 (YNVYGYTGQG…ALQHAFIQEK (320 aa)) is the Protein kinase domain. ATP is bound by residues 693 to 701 (TGQGVFSNV) and K717. K717 bears the N6-acetyllysine mark. D815 (proton acceptor) is an active-site residue. Y849 bears the Phosphotyrosine mark. Phosphoserine is present on S852.

Belongs to the protein kinase superfamily. CMGC Ser/Thr protein kinase family. As to quaternary structure, interacts with CLK1 C-terminus. Associates with the U5 snRNP and NCOR1 deacetylase complexes. Identified in the spliceosome C complex. In terms of processing, phosphorylated by CLK1. Autophosphorylated; phosphorylation inhibits interaction with its targets, such as PRPF6 or SMARCA4. In terms of tissue distribution, ubiquitous.

The protein resides in the nucleus. It localises to the chromosome. It is found in the centromere. The protein localises to the kinetochore. The catalysed reaction is L-seryl-[protein] + ATP = O-phospho-L-seryl-[protein] + ADP + H(+). It catalyses the reaction L-threonyl-[protein] + ATP = O-phospho-L-threonyl-[protein] + ADP + H(+). Its function is as follows. Serine/threonine kinase involved in spliceosomal assembly as well as mitosis and signaling regulation. Connects chromatin mediated regulation of transcription and pre-mRNA splicing. During spliceosomal assembly, interacts with and phosphorylates PRPF6 and PRPF31, components of the U4/U6-U5 tri-small nuclear ribonucleoprotein (snRNP), to facilitate the formation of the spliceosome B complex. Plays a role in regulating transcription and the spindle assembly checkpoint (SAC). Associates with U5 snRNP and NCOR1 deacetylase complexes which may allow a coordination of pre-mRNA splicing with chromatin remodeling events involved in transcriptional regulation. Associates and probably phosphorylates SMARCA4 and NCOR1. Phosphorylates SRSF1. Associates with kinetochores during mitosis and is necessary for recruitment and maintenance of the checkpoint proteins such as MAD1L1 and MAD12L1 at the kinetochores. Phosphorylates and regulates the activity of the transcription factors such as ELK1 and KLF13. Phosphorylates nuclear YAP1 and WWTR1/TAZ which induces nuclear exclusion and regulates Hippo signaling pathway, involved in tissue growth control. The sequence is that of Serine/threonine-protein kinase PRP4 homolog from Homo sapiens (Human).